Consider the following 251-residue polypeptide: Small ribosomal subunit protein uS2 (251 aa).

An N-acetylserine modification is found at serine 2. The interval 213–251 (QVAEEATAAADEDVKEEVAEEQTEAADWAEGNTEEVASW) is disordered. Acidic residues predominate over residues 222-236 (ADEDVKEEVAEEQTE).

Belongs to the universal ribosomal protein uS2 family. As to quaternary structure, component of the small ribosomal subunit. Mature ribosomes consist of a small (40S) and a large (60S) subunit. The 40S subunit contains about 33 different proteins and 1 molecule of RNA (18S). The 60S subunit contains about 49 different proteins and 3 molecules of RNA (25S, 5.8S and 5S). Interacts with RPS21.

It is found in the cytoplasm. Functionally, required for the assembly and/or stability of the 40S ribosomal subunit. Required for the processing of the 20S rRNA-precursor to mature 18S rRNA in a late step of the maturation of 40S ribosomal subunits. The chain is Small ribosomal subunit protein uS2 from Lachancea thermotolerans (strain ATCC 56472 / CBS 6340 / NRRL Y-8284) (Yeast).